Consider the following 645-residue polypeptide: MNKQQKEFKSFYSIRKSSLGVASVAISTLLLLMSNGEAQAAAEETGGTNTEAQPKTEAVASPTTTSEKAPETKPVANAVSVSNKEVEAPTSETKEAKEVKEVKAPKETKEVKPAAKATNNTYPILNQELREAIKNPAIKDKDHSAPNSRPIDFEMKKKDGTQQFYHYASSVKPARVIFTDSKPEIELGLQSGQFWRKFEVYEGDKKLPIKLVSYDTVKDYAYIRFSVSNGTKAVKIVSSTHFNNKEEKYDYTLMEFAQPIYNSADKFKTEEDYKAEKLLAPYKKAKTLERQVYELNKIQDKLPEKLKAEYKKKLEDTKKALDEQVKSAITEFQNVQPTNEKMTDLQDTKYVVYESVENNESMMDTFVKHPIKTGMLNGKKYMVMETTNDDYWKDFMVEGQRVRTISKDAKNNTRTIIFPYVEGKTLYDAIVKVHVKTIDYDGQYHVRIVDKEAFTKANTDKSNKKEQQDNSAKKEATPATPSKPTPSPVEKESQKQDSQKDDNKQLPSVEKENDASSESGKDKTPATKPTKGEVESSSTTPTKVVSTTQNVAKPTTASSKTTKDVVQTSAGSSEAKDSAPLQKANIKNTNDGHTQSQNNKNTQENKAKSLPQTGEESNKDMTLPLMALLALSSIVAFVLPRKRKN.

The N-terminal stretch at 1-40 (MNKQQKEFKSFYSIRKSSLGVASVAISTLLLLMSNGEAQA) is a signal peptide. Positions 12-23 (YSIRKSSLGVAS) match the YSIRK-G/S signaling motif motif. A compositionally biased stretch (low complexity) spans 38–53 (AQAAAEETGGTNTEAQ). A disordered region spans residues 38–113 (AQAAAEETGG…APKETKEVKP (76 aa)). Residues 84 to 113 (KEVEAPTSETKEAKEVKEVKAPKETKEVKP) show a composition bias toward basic and acidic residues. 2 consecutive NEAT domains span residues 144-269 (SAPN…KFKT) and 341-458 (KMTD…TKAN). Positions 362 and 440 each coordinate heme. Basic and acidic residues-rich tracts occupy residues 458 to 476 (NTDK…KKEA) and 489 to 534 (VEKE…KGEV). A disordered region spans residues 458 to 619 (NTDKSNKKEQ…LPQTGEESNK (162 aa)). The segment covering 535 to 560 (ESSSTTPTKVVSTTQNVAKPTTASSK) has biased composition (low complexity). Positions 585–615 (NIKNTNDGHTQSQNNKNTQENKAKSLPQTGE) are enriched in polar residues. An LPXTG sorting signal motif is present at residues 610–614 (LPQTG). A Pentaglycyl murein peptidoglycan amidated threonine modification is found at Thr613. Positions 614 to 645 (GEESNKDMTLPLMALLALSSIVAFVLPRKRKN) are cleaved as a propeptide — removed by sortase.

The protein belongs to the IsdB family. In terms of assembly, interacts with host HBA; this interaction allows heme extraction as iron source. Interacts with IsdA.

The protein resides in the secreted. The protein localises to the cell wall. Cell wall-anchored surface receptor that extracts heme from oxidized metHb to enable growth on hemoglobin as a sole iron source. Rapidly extracts heme from hemoglobin and transfers it to IsdA or IsdC, which then relays it to the membrane transporter/IsdEF for internalization. Also promotes resistance to hydrogen peroxide and killing by neutrophils. This Staphylococcus aureus (strain USA300 / TCH1516) protein is Iron-regulated surface determinant protein B (isdB).